Consider the following 463-residue polypeptide: Bifunctional protein HldE (463 aa).

The segment at 1-311 (MKKILVVGDL…EEIALILNQT (311 aa)) is ribokinase. 191–194 (NRFE) is a binding site for ATP. Asp-260 is a catalytic residue. Residues 334–463 (FTNGCFDLLH…IEKIKRTCND (130 aa)) are cytidylyltransferase.

This sequence in the N-terminal section; belongs to the carbohydrate kinase PfkB family. The protein in the C-terminal section; belongs to the cytidylyltransferase family. As to quaternary structure, homodimer.

The enzyme catalyses D-glycero-beta-D-manno-heptose 7-phosphate + ATP = D-glycero-beta-D-manno-heptose 1,7-bisphosphate + ADP + H(+). The catalysed reaction is D-glycero-beta-D-manno-heptose 1-phosphate + ATP + H(+) = ADP-D-glycero-beta-D-manno-heptose + diphosphate. It participates in nucleotide-sugar biosynthesis; ADP-L-glycero-beta-D-manno-heptose biosynthesis; ADP-L-glycero-beta-D-manno-heptose from D-glycero-beta-D-manno-heptose 7-phosphate: step 1/4. It functions in the pathway nucleotide-sugar biosynthesis; ADP-L-glycero-beta-D-manno-heptose biosynthesis; ADP-L-glycero-beta-D-manno-heptose from D-glycero-beta-D-manno-heptose 7-phosphate: step 3/4. Catalyzes the phosphorylation of D-glycero-D-manno-heptose 7-phosphate at the C-1 position to selectively form D-glycero-beta-D-manno-heptose-1,7-bisphosphate. Its function is as follows. Catalyzes the ADP transfer from ATP to D-glycero-beta-D-manno-heptose 1-phosphate, yielding ADP-D-glycero-beta-D-manno-heptose. The protein is Bifunctional protein HldE of Helicobacter pylori (strain G27).